The chain runs to 94 residues: NADH-ubiquinone oxidoreductase 10.5 kDa subunit (94 aa).

This sequence belongs to the complex I NDUFA2 subunit family. In terms of assembly, complex I is composed of about 40 different subunits.

The protein localises to the mitochondrion inner membrane. Its function is as follows. Accessory subunit of the mitochondrial membrane respiratory chain NADH dehydrogenase (Complex I), that is believed not to be involved in catalysis. Complex I functions in the transfer of electrons from NADH to the respiratory chain. The immediate electron acceptor for the enzyme is believed to be ubiquinone. This chain is NADH-ubiquinone oxidoreductase 10.5 kDa subunit (nuo-10.5), found in Neurospora crassa (strain ATCC 24698 / 74-OR23-1A / CBS 708.71 / DSM 1257 / FGSC 987).